The following is a 750-amino-acid chain: Glycerophosphodiester phosphodiesterase GDPDL7 (750 aa).

Positions 1–17 are cleaved as a signal peptide; the sequence is MLRFIIFFSLFIHLCVA. GP-PDE domains are found at residues 41-339 and 355-654; these read PAVV…SQSI and ALVI…TRYL. N-linked (GlcNAc...) asparagine glycosylation is found at Asn-134, Asn-304, Asn-603, and Asn-716.

The protein belongs to the glycerophosphoryl diester phosphodiesterase family. Expressed in flowers and siliques.

It catalyses the reaction a sn-glycero-3-phosphodiester + H2O = an alcohol + sn-glycerol 3-phosphate + H(+). The polypeptide is Glycerophosphodiester phosphodiesterase GDPDL7 (Arabidopsis thaliana (Mouse-ear cress)).